The following is a 353-amino-acid chain: UPF0283 membrane protein KPK_3110 (353 aa).

A run of 3 helical transmembrane segments spans residues 70-90 (MVSA…VQWT), 99-119 (WIAL…VGSV), and 213-233 (ESTL…FIAW).

It belongs to the UPF0283 family.

It localises to the cell inner membrane. This Klebsiella pneumoniae (strain 342) protein is UPF0283 membrane protein KPK_3110.